A 92-amino-acid chain; its full sequence is Small ribosomal subunit protein bS18 (92 aa).

The interval 1 to 27 (MTQQSNSADRKPRGKGPKRPRKPKVDP) is disordered. Over residues 12 to 22 (PRGKGPKRPRK) the composition is skewed to basic residues.

It belongs to the bacterial ribosomal protein bS18 family. Part of the 30S ribosomal subunit. Forms a tight heterodimer with protein bS6.

Its function is as follows. Binds as a heterodimer with protein bS6 to the central domain of the 16S rRNA, where it helps stabilize the platform of the 30S subunit. This Deinococcus deserti (strain DSM 17065 / CIP 109153 / LMG 22923 / VCD115) protein is Small ribosomal subunit protein bS18.